The primary structure comprises 383 residues: Na(+)/H(+) antiporter NhaA (383 aa).

11 helical membrane passes run 21-41 (AAGV…NSIW), 56-76 (LTMR…LAGL), 94-114 (LLPG…YVAF), 123-143 (GWAI…ALAG), 152-172 (VFLT…IALF), 175-195 (GTLS…LLML), 202-222 (TLFP…KSGI), 258-278 (FVIL…GVTV), 287-307 (LGVG…AVSI), 326-346 (IGIA…AILA), and 355-375 (QIKL…YILL).

It belongs to the NhaA Na(+)/H(+) (TC 2.A.33) antiporter family.

Its subcellular location is the cell inner membrane. The catalysed reaction is Na(+)(in) + 2 H(+)(out) = Na(+)(out) + 2 H(+)(in). Na(+)/H(+) antiporter that extrudes sodium in exchange for external protons. The chain is Na(+)/H(+) antiporter NhaA from Granulibacter bethesdensis (strain ATCC BAA-1260 / CGDNIH1).